A 299-amino-acid polypeptide reads, in one-letter code: 4-diphosphocytidyl-2-C-methyl-D-erythritol kinase (299 aa).

Lys-18 is an active-site residue. 104-114 provides a ligand contact to ATP; the sequence is PIASGIGGGSS. Asp-146 is a catalytic residue.

This sequence belongs to the GHMP kinase family. IspE subfamily.

It catalyses the reaction 4-CDP-2-C-methyl-D-erythritol + ATP = 4-CDP-2-C-methyl-D-erythritol 2-phosphate + ADP + H(+). Its pathway is isoprenoid biosynthesis; isopentenyl diphosphate biosynthesis via DXP pathway; isopentenyl diphosphate from 1-deoxy-D-xylulose 5-phosphate: step 3/6. Catalyzes the phosphorylation of the position 2 hydroxy group of 4-diphosphocytidyl-2C-methyl-D-erythritol. This is 4-diphosphocytidyl-2-C-methyl-D-erythritol kinase from Brucella melitensis biotype 1 (strain ATCC 23456 / CCUG 17765 / NCTC 10094 / 16M).